Consider the following 748-residue polypeptide: Structure-specific endonuclease subunit SLX4 (748 aa).

The segment covering 62 to 75 (KSVTAQKSPMTQET) has biased composition (polar residues). The interval 62–104 (KSVTAQKSPMTQETTKNDTERNKDVDKSCNPVSTSHPDLGGSN) is disordered. At Thr-72 the chain carries Phosphothreonine; by ATR and ATM. Residues 76 to 88 (TKNDTERNKDVDK) show a composition bias toward basic and acidic residues. Thr-113 carries the phosphothreonine; by ATR and ATM modification. Disordered regions lie at residues 215 to 236 (IKTQ…KGEK) and 277 to 303 (EKSS…PPEL). Residues 222–236 (NSDKPPRARNNKGEK) show a composition bias toward basic and acidic residues. Positions 277 to 298 (EKSSNSLDNQESSQQRLWTASQ) are enriched in polar residues. A Phosphoserine; by ATR and ATM modification is found at Ser-289. The residue at position 319 (Thr-319) is a Phosphothreonine; by ATR and ATM. Residues Ser-329 and Ser-355 each carry the phosphoserine; by ATR and ATM modification. Polar residues predominate over residues 591 to 602 (ISTKDSTQNPTT). The disordered stretch occupies residues 591-610 (ISTKDSTQNPTTSNDIIDTS).

It belongs to the SLX4 family. In terms of assembly, forms a heterodimer with SLX1. Interacts with RAD1; catalytic subunit of the RAD1-RAD10 endonuclease. Interacts with RTT107. In terms of processing, phosphorylated by ATR (MEC1) and ATM (TEL1) upon DNA damage. This appears to be required for the function with the RAD1-RAD10 endonuclease.

The protein resides in the nucleus. Its subcellular location is the cytoplasm. Its function is as follows. Regulatory subunit that interacts with and increases the activity of different structure-specific endonucleases. Has several distinct roles in protecting genome stability by resolving diverse forms of deleterious DNA structures. Component of the SLX1-SLX4 structure-specific endonuclease that resolves DNA secondary structures generated during DNA repair and recombination. Has endonuclease activity towards branched DNA substrates, introducing single-strand cuts in duplex DNA close to junctions with ss-DNA. Has a preference for simple Y, 5'-flap and replication fork-like structures. It cleaves the strand bearing the 5'-non-homologous arm at the branch site junction and generates ligatable, nicked products from the 5'-flap or replication fork substrates. Plays a critical role in maintaining the integrity of the ribosomal DNA (rDNA) loci, where it has a role in re-starting stalled replication forks. Has Holliday junction resolvase activity in vitro. Interacts with the structure-specific RAD1-RAD10 endonuclease and promotes RAD1-RAD10-dependent 3'-non-homologous tail removal (NHTR) during repair of double-strand breaks by single-strand annealing. SLX4 also promotes recovery from DNA-alkylation-induced replisome stalling during DNA replication by facilitating the error-free mode of lesion bypass. This does not require SLX1 or RAD1-RAD10, but probably RTT107. The protein is Structure-specific endonuclease subunit SLX4 of Saccharomyces cerevisiae (strain RM11-1a) (Baker's yeast).